The chain runs to 191 residues: Cell division protein SepF (191 aa).

Positions 151–164 (SSSPEEASPSSVST) are enriched in low complexity. Residues 151-191 (SSSPEEASPSSVSTEKTPQYSLGKNTTPEPAWGNSKLSAYS) form a disordered region. Residues 165-178 (EKTPQYSLGKNTTP) show a composition bias toward polar residues.

Belongs to the SepF family. In terms of assembly, homodimer. Interacts with FtsZ.

Its subcellular location is the cytoplasm. In terms of biological role, cell division protein that is part of the divisome complex and is recruited early to the Z-ring. Probably stimulates Z-ring formation, perhaps through the cross-linking of FtsZ protofilaments. Its function overlaps with FtsA. This Prochlorococcus marinus (strain MIT 9301) protein is Cell division protein SepF.